The primary structure comprises 189 residues: Ribosome hibernation promotion factor (189 aa).

This sequence belongs to the HPF/YfiA ribosome-associated protein family. Long HPF subfamily. As to quaternary structure, interacts with 100S ribosomes.

It is found in the cytoplasm. Required for dimerization of active 70S ribosomes into 100S ribosomes in stationary phase; 100S ribosomes are translationally inactive and sometimes present during exponential growth. The chain is Ribosome hibernation promotion factor from Staphylococcus epidermidis (strain ATCC 35984 / DSM 28319 / BCRC 17069 / CCUG 31568 / BM 3577 / RP62A).